Consider the following 224-residue polypeptide: ATP phosphoribosyltransferase (224 aa).

Belongs to the ATP phosphoribosyltransferase family. Short subfamily. As to quaternary structure, heteromultimer composed of HisG and HisZ subunits.

It is found in the cytoplasm. The catalysed reaction is 1-(5-phospho-beta-D-ribosyl)-ATP + diphosphate = 5-phospho-alpha-D-ribose 1-diphosphate + ATP. It participates in amino-acid biosynthesis; L-histidine biosynthesis; L-histidine from 5-phospho-alpha-D-ribose 1-diphosphate: step 1/9. Its function is as follows. Catalyzes the condensation of ATP and 5-phosphoribose 1-diphosphate to form N'-(5'-phosphoribosyl)-ATP (PR-ATP). Has a crucial role in the pathway because the rate of histidine biosynthesis seems to be controlled primarily by regulation of HisG enzymatic activity. The sequence is that of ATP phosphoribosyltransferase from Cupriavidus metallidurans (strain ATCC 43123 / DSM 2839 / NBRC 102507 / CH34) (Ralstonia metallidurans).